The chain runs to 71 residues: MPIVKVRENEPFEVALRRFKRSCEKAGVLSEIRRREYYEKPTQVRKRKQAAAVKRHMKRLNREQQRRQRPY.

Residues 40-71 are disordered; that stretch reads KPTQVRKRKQAAAVKRHMKRLNREQQRRQRPY. A compositionally biased stretch (basic residues) spans 43–59; it reads QVRKRKQAAAVKRHMKR. A compositionally biased stretch (basic and acidic residues) spans 60 to 71; the sequence is LNREQQRRQRPY.

The protein belongs to the bacterial ribosomal protein bS21 family.

This chain is Small ribosomal subunit protein bS21, found in Halorhodospira halophila (strain DSM 244 / SL1) (Ectothiorhodospira halophila (strain DSM 244 / SL1)).